The following is a 212-amino-acid chain: 3-demethoxyubiquinol 3-hydroxylase (212 aa).

The segment covering 1–14 (MTSPSSRTPRGSTP) has biased composition (low complexity). The interval 1–22 (MTSPSSRTPRGSTPPFEPSADE) is disordered. Positions 58, 89, 92, 141, 173, and 176 each coordinate Fe cation.

Belongs to the COQ7 family. It depends on Fe cation as a cofactor.

The protein resides in the cell membrane. The catalysed reaction is a 5-methoxy-2-methyl-3-(all-trans-polyprenyl)benzene-1,4-diol + AH2 + O2 = a 3-demethylubiquinol + A + H2O. The protein operates within cofactor biosynthesis; ubiquinone biosynthesis. Functionally, catalyzes the hydroxylation of 2-nonaprenyl-3-methyl-6-methoxy-1,4-benzoquinol during ubiquinone biosynthesis. This chain is 3-demethoxyubiquinol 3-hydroxylase, found in Rhodospirillum rubrum (strain ATCC 11170 / ATH 1.1.1 / DSM 467 / LMG 4362 / NCIMB 8255 / S1).